The following is a 448-amino-acid chain: Immunoglobulin G-binding protein G (448 aa).

The signal sequence occupies residues 1–33 (MEKEKKVKYFLRKSAFGLASVSAAFLVGSTVFA). Repeat copies occupy residues 104–140 (LAKAKADALKEFNKYGVSDYYKNLINNAKTVEGIKDL), 179–215 (LAEAKVLANRELDKYGVSDYHKNLINNAKTVEGVKEL), 228–282 (TYKL…TVTE), and 298–352 (TYKL…TVTE). Residues 104–215 (LAKAKADALK…AKTVEGVKEL (112 aa)) form a 2 X 37 AA repeats region. The interval 228-352 (TYKLILNGKT…DATKTFTVTE (125 aa)) is 2 X 55 AA repeats. The interval 358 to 422 (PGDAPTEPEK…TLPTTGEGSN (65 aa)) is disordered. Over residues 384-412 (AKDDAKKDDTKKEDAKKPEAKKDDAKKAE) the composition is skewed to basic and acidic residues. Positions 386-410 (DDAKKDDTKKEDAKKPEAKKDDAKK) are 5 X 5 AA repeats of [DE]-D-A-K-K. The short motif at 414 to 418 (LPTTG) is the LPXTG sorting signal element. Threonine 417 bears the Pentaglycyl murein peptidoglycan amidated threonine mark. Residues 418 to 448 (GEGSNPFFTAAALAVMAGAGALAVASKRKED) constitute a propeptide, removed by sortase.

Its subcellular location is the secreted. It localises to the cell wall. Functionally, binds to the constant Fc region of IgG with high affinity. This is Immunoglobulin G-binding protein G (spg) from Streptococcus sp. group G.